Here is a 277-residue protein sequence, read N- to C-terminus: Undecaprenyl-diphosphatase (277 aa).

8 helical membrane-spanning segments follow: residues 11–31, 47–67, 96–116, 123–143, 153–173, 197–217, 227–247, and 254–274; these read WWQA…PISS, AGAS…LIYF, VGIL…KAIW, LWVI…AEQT, LGIW…IPGV, SFLL…ISEF, LGTL…IQFL, and LFIV…ALGF.

Belongs to the UppP family.

It is found in the cell inner membrane. It carries out the reaction di-trans,octa-cis-undecaprenyl diphosphate + H2O = di-trans,octa-cis-undecaprenyl phosphate + phosphate + H(+). Functionally, catalyzes the dephosphorylation of undecaprenyl diphosphate (UPP). Confers resistance to bacitracin. In Synechococcus sp. (strain JA-2-3B'a(2-13)) (Cyanobacteria bacterium Yellowstone B-Prime), this protein is Undecaprenyl-diphosphatase.